The sequence spans 114 residues: Large ribosomal subunit protein bL19 (114 aa).

The protein belongs to the bacterial ribosomal protein bL19 family.

Its function is as follows. This protein is located at the 30S-50S ribosomal subunit interface and may play a role in the structure and function of the aminoacyl-tRNA binding site. The polypeptide is Large ribosomal subunit protein bL19 (Acetivibrio thermocellus (strain ATCC 27405 / DSM 1237 / JCM 9322 / NBRC 103400 / NCIMB 10682 / NRRL B-4536 / VPI 7372) (Clostridium thermocellum)).